We begin with the raw amino-acid sequence, 552 residues long: Mothers against decapentaplegic homolog 4 (552 aa).

A mediates interaction with ZBTB7A region spans residues Met1 to Tyr322. Residues Ser18–Asp142 form the MH1 domain. An N6-acetyllysine modification is found at Lys37. The required for interaction with TSC22D1 stretch occupies residues Val44–Ser69. Residue Cys71 participates in Zn(2+) binding. Lys113 is covalently cross-linked (Glycyl lysine isopeptide (Lys-Gly) (interchain with G-Cter in SUMO2)). Zn(2+)-binding residues include Cys115, Cys127, and His132. The segment at Ser264–His297 is disordered. The SAD stretch occupies residues Pro275–Pro320. An MH2 domain is found at Trp323 to Asp552. N6-acetyllysine is present on residues Lys428 and Lys507. A Glycyl lysine isopeptide (Lys-Gly) (interchain with G-Cter in ubiquitin) cross-link involves residue Lys519.

Belongs to the dwarfin/SMAD family. Monomer; in the absence of TGF-beta activation. Heterotrimer; on TGF-beta activation. Heterotrimer composed of two molecules of a C-terminally phosphorylated R-SMAD molecule, SMAD2 or SMAD3, and one molecule of SMAD4 to form the transcriptional active SMAD2/SMAD3-SMAD4 complex. Found in a ternary complex composed of SMAD4, STK11/LKB1 and STK11IP. Found in a complex with SMAD1 and YY1. Identified in a complex that contains at least ZNF451, SMAD2, SMAD3 and SMAD4. Interacts with ATF2, COPS5, DACH1, MSG1, SKI, STK11/LKB1, STK11IP and TRIM33. Associates with ZNF423 or ZNF521 in response to BMP2 leading to activate transcription of BMP target genes. Interacts with USP9X. Interacts with RBPMS. Interacts with WWTR1 (via coiled-coil domain). Interacts with CITED1 and CITED2. Interacts with PDPK1 (via PH domain). Interacts with VPS39; this interaction affects heterodimer formation with SMAD3, but not with SMAD2, and leads to inhibition of SMAD3-dependent transcription activation. Interactions with VPS39 and SMAD2 may be mutually exclusive. Interacts (via MH2 domain) with ZNF451 (via N-terminal zinc-finger domains). Interacts with ZC3H3. Interacts weakly with ZNF8. Interacts with NUP93 and IPO7; translocates SMAD4 to the nucleus through the NPC upon BMP7 stimulation resulting in activation of SMAD4 signaling. Interacts with CREB3L1, the interaction takes place upon TGFB1 induction and SMAD4 acts as a CREB3L1 coactivator to induce the expression of genes involved in the assembly of collagen extracellular matrix. Interacts with DLX1. Interacts with ZBTB7A; the interaction is direct and stimulated by TGFB1. Interacts with CREBBP; the recruitment of this transcriptional coactivator is negatively regulated by ZBTB7A. Interacts with EP300; the interaction with this transcriptional coactivator is negatively regulated by ZBTB7A. Interacts with HDAC1. Interacts (via MH2 domain) with ZMIZ1 (via SP-RING-type domain); in the TGF-beta signaling pathway increases the activity of the SMAD3/SMAD4 transcriptional complex. Interacts (via N-terminus) with TSC22D1. Phosphorylated by PDPK1. Post-translationally, monoubiquitinated on Lys-519 by E3 ubiquitin-protein ligase TRIM33. Monoubiquitination hampers its ability to form a stable complex with activated SMAD2/3 resulting in inhibition of TGF-beta/BMP signaling cascade. Deubiquitination by USP9X restores its competence to mediate TGF-beta signaling.

It is found in the cytoplasm. The protein localises to the nucleus. Common SMAD (co-SMAD) is the coactivator and mediator of signal transduction by TGF-beta (transforming growth factor). Component of the heterotrimeric SMAD2/SMAD3-SMAD4 complex that forms in the nucleus and is required for the TGF-mediated signaling. Promotes binding of the SMAD2/SMAD4/FAST-1 complex to DNA and provides an activation function required for SMAD1 or SMAD2 to stimulate transcription. Component of the multimeric SMAD3/SMAD4/JUN/FOS complex which forms at the AP1 promoter site; required for synergistic transcriptional activity in response to TGF-beta. Acts synergistically with SMAD1 and YY1 in bone morphogenetic protein (BMP)-mediated cardiac-specific gene expression. Binds to SMAD binding elements (SBEs) (5'-GTCT/AGAC-3') within BMP response element (BMPRE) of cardiac activating regions. May act as a tumor suppressor. Positively regulates PDPK1 kinase activity by stimulating its dissociation from the 14-3-3 protein YWHAQ which acts as a negative regulator. In muscle physiology, plays a central role in the balance between atrophy and hypertrophy. When recruited by MSTN, promotes atrophy response via phosphorylated SMAD2/4. MSTN decrease causes SMAD4 release and subsequent recruitment by the BMP pathway to promote hypertrophy via phosphorylated SMAD1/5/8. The polypeptide is Mothers against decapentaplegic homolog 4 (SMAD4) (Sus scrofa (Pig)).